The following is a 527-amino-acid chain: L-amino-acid oxidase (527 aa).

An N-terminal signal peptide occupies residues 1–27 (MDLHRAPWKSSAAAAVLLLALFSGAAA). A disulfide bridge connects residues cysteine 37 and cysteine 200. Asparagine 58 carries an N-linked (GlcNAc...) asparagine glycan. FAD-binding positions include 70-71 (VA), 90-91 (EA), arginine 98, 114-117 (GAMR), and valine 288. Position 117 (arginine 117) interacts with substrate. N-linked (GlcNAc...) asparagine glycosylation occurs at asparagine 393. Tyrosine 403 contacts substrate. FAD contacts are provided by residues glutamate 485 and 492–497 (AWMESA). 492–493 (AW) provides a ligand contact to substrate.

In terms of assembly, homodimer. Requires FAD as cofactor. Expression mainly observed in plasma, spleen, kidney and gills with low levels detected in blood and no expression detected in brain, liver, heart, muscle or intestine (at protein level).

It localises to the secreted. It catalyses the reaction an L-alpha-amino acid + O2 + H2O = a 2-oxocarboxylate + H2O2 + NH4(+). Its function is as follows. Inhibits the growth of both Gram-negative and Gram-positive bacteria. Displays strong antibacterial activity towards V.cholerae and E.tarda. Causes deformation of the surface of S.aureus and the formation of pores on the surface of E.coli. Strong antiparasitic activity is seen towards C.irritans, T.brucei and I.multifiliis. Cilia of treated theronts are lost and the macronucleus swells, inducing cell membrane rupture and efflux of the cytoplasm. The polypeptide is L-amino-acid oxidase (Siganus canaliculatus (White-spotted spinefoot)).